A 1327-amino-acid polypeptide reads, in one-letter code: P-glycoprotein 14 (1327 aa).

Basic and acidic residues predominate over residues 1-17; the sequence is MAPKDDPDNRGFDDQRR. Positions 1–23 are disordered; it reads MAPKDDPDNRGFDDQRRPSQRST. Topologically, residues 1 to 104 are cytoplasmic; the sequence is MAPKDDPDNR…RYGKKFDYLL (104 aa). A helical membrane pass occupies residues 105 to 125; it reads LFIGTICAIISGVSQPILALV. The ABC transmembrane type-1 1 domain occupies 106–394; the sequence is FIGTICAIIS…ISPHMMVLLN (289 aa). Residues 126–151 are Extracellular-facing; that stretch reads SGRVTNALLVYPPTSKQFRNKANENV. The chain crosses the membrane as a helical span at residues 152 to 172; it reads YIFLGIGIFISITNFIQYMCF. Residues 173 to 225 are Cytoplasmic-facing; that stretch reads QHCCTRVMAQMRHRFVYSVLRQNAGWFDKNHSGTITTKLNDSMERIREGIGDK. Residues 226-246 traverse the membrane as a helical segment; sequence LGVLLRGFAMLIAAIVVAYIY. Residue Glu247 is a topological domain, extracellular. A helical membrane pass occupies residues 248-268; it reads WRLASMMLGVAPTCCICMSLL. Residues 269 to 331 lie on the Cytoplasmic side of the membrane; it reads ARQMTSTTIK…KFAVWKGFWS (63 aa). Residues 332 to 352 traverse the membrane as a helical segment; that stretch reads GFFGGLFFFWLFSFLGCGMLY. Over 353–364 the chain is Extracellular; that stretch reads GAYLLKVGIITT. Residues 365 to 385 form a helical membrane-spanning segment; it reads PGDVFIVVMSMLLGAYFLGLI. Over 386–766 the chain is Cytoplasmic; that stretch reads SPHMMVLLNA…NAKGNYLYMF (381 aa). In terms of domain architecture, ABC transporter 1 spans 429 to 665; the sequence is VKFENVHFRY…GGRYFDLVKA (237 aa). 464–471 serves as a coordination point for ATP; that stretch reads GHSGCGKS. The disordered stretch occupies residues 671–721; the sequence is DPEATEEFEEEEIDLDDTSRSSRRSSMTSARSGSEAFRRGNSLNDSFSGSK. Positions 673 to 686 are enriched in acidic residues; sequence EATEEFEEEEIDLD. The segment covering 694-704 has biased composition (low complexity); that stretch reads RSSMTSARSGS. The span at 711 to 721 shows a compositional bias: polar residues; the sequence is NSLNDSFSGSK. Residues 766–1053 form the ABC transmembrane type-1 2 domain; that stretch reads FLGTVFALIR…SAQYFPEFVK (288 aa). A helical membrane pass occupies residues 767 to 789; sequence LGTVFALIRGLELPALALIFGWV. Residues 790 to 805 are Extracellular-facing; sequence FEGFTFVPYGGRMMHR. Residues 806–826 traverse the membrane as a helical segment; it reads MAMAVIAFASVGVGVWFSQLA. Residues 827–886 are Cytoplasmic-facing; that stretch reads SSVLFAVVSENLSMRFRVQSFRNLLYQDASYFDNPAHAPGKLITRLASDAPNIKAVVDAR. The helical transmembrane segment at 887 to 907 threads the bilayer; that stretch reads MLQVIYALAAIIANIAIAFIY. Residues 908-910 are Extracellular-facing; sequence CWQ. A helical membrane pass occupies residues 911–931; the sequence is IGILGTSLILLLAFVMIGLAY. Topologically, residues 932–996 are cytoplasmic; sequence KISLMNVEQI…KGMIEAINYS (65 aa). A helical transmembrane segment spans residues 997 to 1017; sequence LTQSFMYFMMCFTYAVGIRII. Over 1018-1030 the chain is Extracellular; it reads YQGDKSSDDTFKG. A helical transmembrane segment spans residues 1031–1051; that stretch reads IIAMMLGAVAVMNSAQYFPEF. At 1052 to 1327 the chain is on the cytoplasmic side; the sequence is VKAKTAAGML…KLIKKQDLAV (276 aa). The region spanning 1086 to 1322 is the ABC transporter 2 domain; that stretch reads ILFENVKFSY…KGRYYKLIKK (237 aa). Residue 1121–1128 participates in ATP binding; sequence GPSGSGKS.

It belongs to the ABC transporter superfamily. ABCB family. Multidrug resistance exporter (TC 3.A.1.201) subfamily. In terms of tissue distribution, expressed in pharyngeal epithelial cells that surround the anterior pharyngeal cuticle. Shares same expression pattern as sms-5.

The protein localises to the apical cell membrane. Functionally, contributes to the establishment of a polar lipid barrier to block small molecule passage into the pharyngeal cuticle. Probably exports polar lipids into the developing pharyngeal cuticle to protect against xenobiotic insult. Likely functions in the same pathway as sphingomyelin synthase sms-5. The sequence is that of P-glycoprotein 14 from Caenorhabditis elegans.